Reading from the N-terminus, the 159-residue chain is Endoribonuclease YbeY (159 aa).

Zn(2+)-binding residues include histidine 122, histidine 126, and histidine 132.

The protein belongs to the endoribonuclease YbeY family. The cofactor is Zn(2+).

Its subcellular location is the cytoplasm. Single strand-specific metallo-endoribonuclease involved in late-stage 70S ribosome quality control and in maturation of the 3' terminus of the 16S rRNA. The chain is Endoribonuclease YbeY from Roseiflexus castenholzii (strain DSM 13941 / HLO8).